Here is a 148-residue protein sequence, read N- to C-terminus: Large ribosomal subunit protein bL9 (148 aa).

It belongs to the bacterial ribosomal protein bL9 family.

Functionally, binds to the 23S rRNA. This Pseudomonas putida (strain GB-1) protein is Large ribosomal subunit protein bL9.